Here is a 176-residue protein sequence, read N- to C-terminus: Large ribosomal subunit protein bL19 (176 aa).

The protein belongs to the bacterial ribosomal protein bL19 family.

Its function is as follows. This protein is located at the 30S-50S ribosomal subunit interface and may play a role in the structure and function of the aminoacyl-tRNA binding site. This is Large ribosomal subunit protein bL19 from Sinorhizobium fredii (strain NBRC 101917 / NGR234).